A 595-amino-acid polypeptide reads, in one-letter code: Isoprene synthase, chloroplastic (595 aa).

The N-terminal 37 residues, 1 to 37 (MATELLCLHRPISLTHKLFRNPLPKVIQATPLTLKLR), are a transit peptide targeting the chloroplast. Aspartate 345 lines the dimethylallyl diphosphate pocket. The Mg(2+) site is built by aspartate 345 and aspartate 349. The short motif at 345-349 (DDIYD) is the DDXXD motif element. Residues glutamate 423, arginine 486, and asparagine 489 each coordinate dimethylallyl diphosphate. Residues asparagine 489, serine 493, and glutamate 497 each contribute to the Mg(2+) site.

It belongs to the terpene synthase family. Tpsb subfamily. Mg(2+) is required as a cofactor. The cofactor is Mn(2+).

Its subcellular location is the plastid. It localises to the chloroplast. The enzyme catalyses dimethylallyl diphosphate = isoprene + diphosphate. Functionally, lyase that catalyzes the formation of isoprene from dimethylallyl diphosphate. The sequence is that of Isoprene synthase, chloroplastic (ISPS) from Populus tremuloides (Quaking aspen).